Consider the following 257-residue polypeptide: 7-carboxy-7-deazaguanine synthase (257 aa).

The segment at 1–25 (MKSVDHPVDVLPAEHSAETPGDARA) is disordered. Substrate is bound by residues 39-41 (RQG) and Arg-54. The 200-residue stretch at 45–244 (LTGTESVFIR…AISRGYQYCD (200 aa)) folds into the Radical SAM core domain. Residues Cys-58, Cys-62, and Cys-65 each coordinate [4Fe-4S] cluster. Thr-67 lines the Mg(2+) pocket. Residue Thr-99 participates in substrate binding. Residues Gly-101 and 143–145 (SPK) contribute to the S-adenosyl-L-methionine site.

Belongs to the radical SAM superfamily. 7-carboxy-7-deazaguanine synthase family. As to quaternary structure, homodimer. [4Fe-4S] cluster is required as a cofactor. The cofactor is S-adenosyl-L-methionine. It depends on Mg(2+) as a cofactor.

The catalysed reaction is 6-carboxy-5,6,7,8-tetrahydropterin + H(+) = 7-carboxy-7-deazaguanine + NH4(+). It functions in the pathway purine metabolism; 7-cyano-7-deazaguanine biosynthesis. In terms of biological role, catalyzes the complex heterocyclic radical-mediated conversion of 6-carboxy-5,6,7,8-tetrahydropterin (CPH4) to 7-carboxy-7-deazaguanine (CDG), a step common to the biosynthetic pathways of all 7-deazapurine-containing compounds. The sequence is that of 7-carboxy-7-deazaguanine synthase from Rhodopirellula baltica (strain DSM 10527 / NCIMB 13988 / SH1).